Here is a 366-residue protein sequence, read N- to C-terminus: uncharacterized protein (366 aa).

The disordered stretch occupies residues 199 to 267 (QKKQIEDEEK…QLKDAQAKRD (69 aa)).

This is an uncharacterized protein from Haemophilus influenzae (strain ATCC 51907 / DSM 11121 / KW20 / Rd).